We begin with the raw amino-acid sequence, 29 residues long: NAD(P)H-quinone oxidoreductase subunit 5, chloroplastic (29 aa).

Residues 1–15 traverse the membrane as a helical segment; it reads SGSIIHSMEANVGYS.

Belongs to the complex I subunit 5 family. As to quaternary structure, NDH is composed of at least 16 different subunits, 5 of which are encoded in the nucleus.

The protein localises to the plastid. Its subcellular location is the chloroplast thylakoid membrane. It carries out the reaction a plastoquinone + NADH + (n+1) H(+)(in) = a plastoquinol + NAD(+) + n H(+)(out). The catalysed reaction is a plastoquinone + NADPH + (n+1) H(+)(in) = a plastoquinol + NADP(+) + n H(+)(out). Its function is as follows. NDH shuttles electrons from NAD(P)H:plastoquinone, via FMN and iron-sulfur (Fe-S) centers, to quinones in the photosynthetic chain and possibly in a chloroplast respiratory chain. The immediate electron acceptor for the enzyme in this species is believed to be plastoquinone. Couples the redox reaction to proton translocation, and thus conserves the redox energy in a proton gradient. The sequence is that of NAD(P)H-quinone oxidoreductase subunit 5, chloroplastic from Pseudotsuga menziesii (Douglas-fir).